The sequence spans 206 residues: Sclerostin domain-containing protein 1 (206 aa).

The signal sequence occupies residues 1 to 23 (MLPPAIHLSLIPLLCILMRNCLA). Residues 42–62 (AHPSSNSTLNQARNGGRHFSS) are disordered. Residues 44–62 (PSSNSTLNQARNGGRHFSS) are compositionally biased toward polar residues. Asparagine 47 carries an N-linked (GlcNAc...) asparagine glycan. 4 disulfides stabilise this stretch: cysteine 75–cysteine 133, cysteine 89–cysteine 147, cysteine 100–cysteine 163, and cysteine 104–cysteine 165. Residues 75–170 (CRELRSTKYI…TACKCKRYTR (96 aa)) form the CTCK domain. The N-linked (GlcNAc...) asparagine glycan is linked to asparagine 173. The tract at residues 176-206 (SHNFESVSPAKPAQHHRERKRASKSSKHSLS) is disordered. Positions 188 to 206 (AQHHRERKRASKSSKHSLS) are enriched in basic residues.

It belongs to the sclerostin family. As to quaternary structure, interacts with BMP2, BMP4, BMP6 and BMP7 with high affinity. Highly expressed in kidney at renal collecting ducts level and weakly in brain.

The protein resides in the secreted. Its function is as follows. May be involved in the onset of endometrial receptivity for implantation/sensitization for the decidual cell reaction. Enhances Wnt signaling and inhibits TGF-beta signaling. Directly antagonizes activity of BMP2, BMP4, BMP6 and BMP7 in a dose-dependent manner. The polypeptide is Sclerostin domain-containing protein 1 (Sostdc1) (Mus musculus (Mouse)).